The following is a 461-amino-acid chain: Spermidine/putrescine import ATP-binding protein PotA (461 aa).

Residues 10-240 (IEVNGVSKFF…PINSFVADFI (231 aa)) enclose the ABC transporter domain. Residue 42–49 (GPSGCGKT) participates in ATP binding.

Belongs to the ABC transporter superfamily. Spermidine/putrescine importer (TC 3.A.1.11.1) family. The complex is composed of two ATP-binding proteins (PotA), two transmembrane proteins (PotB and PotC) and a solute-binding protein (PotD).

It localises to the cell inner membrane. The catalysed reaction is ATP + H2O + polyamine-[polyamine-binding protein]Side 1 = ADP + phosphate + polyamineSide 2 + [polyamine-binding protein]Side 1.. In terms of biological role, part of the ABC transporter complex PotABCD involved in spermidine/putrescine import. Responsible for energy coupling to the transport system. The chain is Spermidine/putrescine import ATP-binding protein PotA from Bacteroides fragilis (strain YCH46).